The primary structure comprises 1079 residues: MTENKTKVKDLAAELGVTTKELGQVLKDMNISAKTSTSVIAQEDLPRIKERVQAQRDGGARKEGNPDVIVRRRHRDGDRASARAEAKAPEQEATAAMPETSAPERAEEADKPAVAKPAKAPETEAHARARKEPQAEPVKARIIRRPDEPAPVAKVVEAAPAETPAPEAPAVKATVTAEAAPAKTVEPESERPQADKPATARVVRPATPDASAVPDGTSSAPTLPVRSAEPSDTVERADADADGDDDDAQQRRRKKKRRQPEAVVPQVRVISRPDPAAVAQQQMQQQAAQQQREAGGYRPGGQRPEGGYRPEGQREGGYRPEGQREGGYRPGGAPRPEGGYRPGGPRPEGGYRPGAPRPEGGYRPAGGPRPEGQREGGYRPGAPRPEGGYRPAGGAPRPEGQREGGYRPAGGPPRPGGAPRPGGFGGAPGGMPVPGADGRGDQSKKKRQKGRRTVDFQADGPRGRSDDDVMRGPRGRGKRGKKDVRPAATQPLKAVKRKIKVDEAIRVADMAHQMGLKANEIIKVLFGLGVMATINQSLDIDTATVVAGEFGYEVEKVGFSEDDYLVPKEEDAPETLVTRPPVVTIMGHVDHGKTSLLDAIRKSNVTAGEAGGITQHIGAYHVTTKKGEIVFLDTPGHEAFTAMRARGAQITDLVVLVVAADDGVMEQTREAVNHSKAAGVPIMVAVNKMDKEGANPDRVIRELSELGLVAEDWGGDTIFAKVSAKTREGLDELLELIAIQAEILELKANPDKAARGHVVEAKLDKGRGPLATVLVQEGTLRQGDAFVCGVFAGRVRAMFDDQGRKVKEAGPSTPVEVQGFDGVVEAGEEFVSVADDKVARRIAESRAVKQRERELAKESKVTLETFLSRRADAAEALTLNLVLKADVQGTLEAISEAVRKLSTEKVKINIIHGGAGAITESDILLASASDAIIIGFNVRPTSKVKDIAEQENVDIRFYDIIYKLVDEIKSAMAGMLAPVQREVYLGQAEVRETFSVPKIGVIAGCHVADGKVTRNAGVRLLRDGVVVYTGKITSLKRFKDDVRDVQKGYECGMGLENFNDIKVGDVIEAFEMVEEAATL.

Basic and acidic residues-rich tracts occupy residues 52–65, 75–90, and 102–134; these read VQAQ…KEGN, RDGD…KAPE, and APER…KEPQ. Residues 52 to 488 are disordered; it reads VQAQRDGGAR…RGKKDVRPAA (437 aa). Residues 150-184 show a composition bias toward low complexity; that stretch reads APVAKVVEAAPAETPAPEAPAVKATVTAEAAPAKT. Over residues 185–194 the composition is skewed to basic and acidic residues; it reads VEPESERPQA. The segment covering 276–291 has biased composition (low complexity); the sequence is AAVAQQQMQQQAAQQQ. Residues 306–327 show a composition bias toward basic and acidic residues; the sequence is GGYRPEGQREGGYRPEGQREGG. Composition is skewed to low complexity over residues 348 to 370 and 380 to 398; these read EGGY…GPRP and PGAP…APRP. Positions 419 to 429 are enriched in gly residues; it reads PRPGGFGGAPG. The segment covering 461–471 has biased composition (basic and acidic residues); sequence PRGRSDDDVMR. Residues 473-482 show a composition bias toward basic residues; sequence PRGRGKRGKK. Residues 578–745 enclose the tr-type G domain; the sequence is TRPPVVTIMG…LIAIQAEILE (168 aa). Positions 587–594 are G1; sequence GHVDHGKT. 587–594 provides a ligand contact to GTP; sequence GHVDHGKT. The segment at 612-616 is G2; that stretch reads GITQH. A G3 region spans residues 633-636; sequence DTPG. Residues 633-637 and 687-690 each bind GTP; these read DTPGH and NKMD. The G4 stretch occupies residues 687 to 690; sequence NKMD. The segment at 723–725 is G5; that stretch reads SAK.

The protein belongs to the TRAFAC class translation factor GTPase superfamily. Classic translation factor GTPase family. IF-2 subfamily.

The protein localises to the cytoplasm. In terms of biological role, one of the essential components for the initiation of protein synthesis. Protects formylmethionyl-tRNA from spontaneous hydrolysis and promotes its binding to the 30S ribosomal subunits. Also involved in the hydrolysis of GTP during the formation of the 70S ribosomal complex. This Nitratidesulfovibrio vulgaris (strain ATCC 29579 / DSM 644 / CCUG 34227 / NCIMB 8303 / VKM B-1760 / Hildenborough) (Desulfovibrio vulgaris) protein is Translation initiation factor IF-2.